Here is a 146-residue protein sequence, read N- to C-terminus: Anti-sigma F factor (146 aa).

It belongs to the anti-sigma-factor family.

It catalyses the reaction L-seryl-[protein] + ATP = O-phospho-L-seryl-[protein] + ADP + H(+). The catalysed reaction is L-threonyl-[protein] + ATP = O-phospho-L-threonyl-[protein] + ADP + H(+). Functionally, binds to sigma F and blocks its ability to form an RNA polymerase holoenzyme (E-sigma F). Phosphorylates SpoIIAA on a serine residue. This phosphorylation may enable SpoIIAA to act as an anti-anti-sigma factor that counteracts SpoIIAB and thus releases sigma F from inhibition. In Halalkalibacterium halodurans (strain ATCC BAA-125 / DSM 18197 / FERM 7344 / JCM 9153 / C-125) (Bacillus halodurans), this protein is Anti-sigma F factor.